A 267-amino-acid polypeptide reads, in one-letter code: Very long chain fatty acid elongase 6 (267 aa).

Residue Asn-2 is glycosylated (N-linked (GlcNAc...) asparagine). Helical transmembrane passes span 34 to 51, 70 to 90, 111 to 131, 136 to 156, 159 to 179, 197 to 217, and 234 to 254; these read FLFS…RHLM, LAVF…YILM, FWAY…IFII, KLIF…WYSY, MVAG…VMYS, FITL…YLVF, and IFWS…FFFE.

The protein belongs to the ELO family. ELOVL6 subfamily. N-Glycosylated. As to expression, highly expressed in adrenal gland, liver, white adipose tissue (WAT), adult and fetal brain, cerebellum, spinal cord, testis, skin and peripheral nerve; where lipogenesis and steroidogenesis are active. Weakly expressed in kidney, heart, skeletal muscle, lung, and spleen.

It localises to the endoplasmic reticulum membrane. It carries out the reaction a very-long-chain acyl-CoA + malonyl-CoA + H(+) = a very-long-chain 3-oxoacyl-CoA + CO2 + CoA. The catalysed reaction is hexadecanoyl-CoA + malonyl-CoA + H(+) = 3-oxooctadecanoyl-CoA + CO2 + CoA. It catalyses the reaction (9Z)-hexadecenoyl-CoA + malonyl-CoA + H(+) = 3-oxo-(11Z)-octadecenoyl-CoA + CO2 + CoA. The enzyme catalyses dodecanoyl-CoA + malonyl-CoA + H(+) = 3-oxotetradecanoyl-CoA + CO2 + CoA. It carries out the reaction tetradecanoyl-CoA + malonyl-CoA + H(+) = 3-oxohexadecanoyl-CoA + CO2 + CoA. The catalysed reaction is (9Z)-octadecenoyl-CoA + malonyl-CoA + H(+) = 3-oxo-(11Z)-eicosenoyl-CoA + CO2 + CoA. It catalyses the reaction (9Z,12Z)-octadecadienoyl-CoA + malonyl-CoA + H(+) = (11Z,14Z)-3-oxoicosa-11,14-dienoyl-CoA + CO2 + CoA. The enzyme catalyses (9Z,12Z,15Z)-octadecatrienoyl-CoA + malonyl-CoA + H(+) = (11Z,14Z,17Z)-3-oxoeicosatrienoyl-CoA + CO2 + CoA. Its pathway is lipid metabolism; fatty acid biosynthesis. Its activity is regulated as follows. The reaction is stimulated by the presence of HSD17B12, the enzyme catalyzing the second step of the elongation cycle. Functionally, catalyzes the first and rate-limiting reaction of the four reactions that constitute the long-chain fatty acids elongation cycle. This endoplasmic reticulum-bound enzymatic process allows the addition of 2 carbons to the chain of long- and very long-chain fatty acids (VLCFAs) per cycle. Condensing enzyme that elongates fatty acids with 12, 14 and 16 carbons with higher activity toward C16:0 acyl-CoAs. Catalyzes the synthesis of unsaturated C16 long chain fatty acids and, to a lesser extent, C18:0 and those with low desaturation degree. May participate in the production of saturated and monounsaturated VLCFAs of different chain lengths that are involved in multiple biological processes as precursors of membrane lipids and lipid mediators. The polypeptide is Very long chain fatty acid elongase 6 (Mus musculus (Mouse)).